Here is a 434-residue protein sequence, read N- to C-terminus: Prenyltransferase fogH (434 aa).

L-tryptophan is bound at residue Glu86. Residues Arg101, Arg248, Lys250, Tyr252, and Tyr346 each coordinate substrate.

It belongs to the tryptophan dimethylallyltransferase family.

It participates in secondary metabolite biosynthesis. Its function is as follows. Prenyltransferase; part of the gene cluster that mediates the biosynthesis of flavoglaucin and congeners (including aspergin, dihydroauroglaucin and auroglaucin), prenylated salicylaldehyde derivatives carrying a saturated or an unsaturated C-7 side chain. The PKS fogA releases the carboxylic acid (8E,10E,12E)-3,5,7-trihydroxytetradeca-8,10,12-trienoic acid as its product, as well as derivatives with one and two double bonds. FogA is indeed able to reduce the initial triketide, thus being at least partially responsible for the differently saturated heptyl side chains of flavoglaucin congeners. The oxidoreductases fogB, fogC and fogD modify the nascent polyketide in fogA-bound form and, together, fogA, fogB, fogC and fogD are necessary for the formation of the aromatic core and the cyclized PKS products are released as salicyl alcohols. In particular, fogB is responsible for oxidation of a hydroxyl group or reduction of remaining double bond(s) at the C-7 residue whereas fogD is probably involved in the reductive release of the modified PKS products. The cytochrome P450 monooxygenase fogE is then responsible for the hydroxylation at C-3 of the benzene ring. The fogE products are substrates of the prenyltransferase fogH and the prenylated benzyl alcohols are subsequently oxidized by the fogF to produce the final aryl aldehydes flavoglaucin and congeners. The short-chain dehydrogenase fogG does not seem to be involved in the biosynthesis of the prenylated salicylaldehyde derivatives. The polypeptide is Prenyltransferase fogH (Aspergillus ruber (strain CBS 135680)).